The primary structure comprises 265 residues: Shikimate dehydrogenase (NADP(+)) (265 aa).

Shikimate is bound by residues 15–17 (SLS) and T62. Catalysis depends on K66, which acts as the Proton acceptor. E78 contacts NADP(+). Residues N87 and D102 each contribute to the shikimate site. NADP(+)-binding positions include 126-130 (GAGGV), 150-155 (NRTELK), and V210. Y212 is a shikimate binding site. G233 contacts NADP(+).

This sequence belongs to the shikimate dehydrogenase family. Homodimer.

The catalysed reaction is shikimate + NADP(+) = 3-dehydroshikimate + NADPH + H(+). Its pathway is metabolic intermediate biosynthesis; chorismate biosynthesis; chorismate from D-erythrose 4-phosphate and phosphoenolpyruvate: step 4/7. In terms of biological role, involved in the biosynthesis of the chorismate, which leads to the biosynthesis of aromatic amino acids. Catalyzes the reversible NADPH linked reduction of 3-dehydroshikimate (DHSA) to yield shikimate (SA). The chain is Shikimate dehydrogenase (NADP(+)) from Pelagibacter ubique (strain HTCC1062).